We begin with the raw amino-acid sequence, 704 residues long: Rabphilin-3A (704 aa).

Over residues 1-12 (MTDTVFSSSSSR) the composition is skewed to polar residues. The segment at 1-52 (MTDTVFSSSSSRWMCPSDRPLQSNDKEQLQTGWSVHPSGQPDRQRKQEELTD) is disordered. The region spanning 44–161 (QRKQEELTDE…KRSGAWFFKG (118 aa)) is the RabBD domain. The FYVE-type zinc-finger motif lies at 92-149 (GDGVNRCILCGEQLGMLGSACVVCEDCKKNVCTKCGVETSNNRPHPVWLCKICIEQRE). Residues C98, C101, C115, C118, C123, C126, C141, and C144 each coordinate Zn(2+). The tract at residues 167 to 398 (LPQPMPIKKN…EEEANSYDSD (232 aa)) is disordered. The span at 205 to 214 (TRGDTEDRRG) shows a compositional bias: basic and acidic residues. R229 bears the Omega-N-methylarginine mark. A Phosphoserine modification is found at S277. A compositionally biased stretch (low complexity) spans 279 to 290 (QASRPAPASMQS). The span at 291–310 (PAPPQPGQPGPPGGSRPSPG) shows a compositional bias: pro residues. A compositionally biased stretch (low complexity) spans 366 to 380 (QASAAAPQPVVASAR). Residues 385 to 398 (PEEDEEEANSYDSD) are compositionally biased toward acidic residues. The C2 1 domain maps to 402–524 (TLGALEFSLL…KPNQRKNFNI (123 aa)). Ca(2+)-binding residues include M432, D433, D439, D494, E495, D496, E502, E549, D591, D597, D651, Y652, D653, and D659. The 134-residue stretch at 560-693 (ERGKILVSLM…NKDKKIERWH (134 aa)) folds into the C2 2 domain. Residues S702 and S703 each carry the phosphoserine modification.

As to quaternary structure, interacts with RAB3B, RAB3C, RAB3D, RAB8A, RAB27A and RAB27B. Interacts with RAB3A; this interaction recruits RPH3A to synaptic vesicules. Interacts (via C2B domain) with SNAP25. Interacts with deubiquitinating enzyme CAND1; this interaction results in the deubiquitination of RPH3A. Interacts with GRIN2A and DLG4; this ternary complex regulates NMDA receptor composition at postsynaptic membranes. Interacts with SNCA. Ca(2+) is required as a cofactor. Ubiquitinated. Deubiquitinated by CAND1 to prevent its degradation. Specifically expressed in brain.

Its subcellular location is the cytoplasmic vesicle. The protein localises to the secretory vesicle. It localises to the synaptic vesicle membrane. The protein resides in the cell projection. It is found in the dendritic spine. Its subcellular location is the postsynaptic cell membrane. The protein localises to the membrane. Plays an essential role in docking and fusion steps of regulated exocytosis. At the presynaptic level, RPH3A is recruited by RAB3A to the synaptic vesicle membrane in a GTP-dependent manner where it modulates synaptic vesicle trafficking and calcium-triggered neurotransmitter release. In the post-synaptic compartment, forms a ternary complex with GRIN2A and DLG4 and regulates NMDA receptor stability. Also plays a role in the exocytosis of arginine vasopressin hormone. The sequence is that of Rabphilin-3A (RPH3A) from Bos taurus (Bovine).